We begin with the raw amino-acid sequence, 98 residues long: Small ribosomal subunit protein bS6 (98 aa).

This sequence belongs to the bacterial ribosomal protein bS6 family.

Binds together with bS18 to 16S ribosomal RNA. This Lacticaseibacillus paracasei (strain ATCC 334 / BCRC 17002 / CCUG 31169 / CIP 107868 / KCTC 3260 / NRRL B-441) (Lactobacillus paracasei) protein is Small ribosomal subunit protein bS6.